A 473-amino-acid chain; its full sequence is Trehalose-6-phosphate synthase (473 aa).

Residue arginine 10 coordinates D-glucose 6-phosphate. A UDP-alpha-D-glucose-binding site is contributed by glycine 21–glycine 22. Tyrosine 76 and aspartate 130 together coordinate D-glucose 6-phosphate. 2 residues coordinate UDP-alpha-D-glucose: arginine 262 and lysine 267. Arginine 300 lines the D-glucose 6-phosphate pocket. Residues phenylalanine 339 and leucine 365 to glutamate 369 contribute to the UDP-alpha-D-glucose site.

This sequence belongs to the glycosyltransferase 20 family. Homotetramer.

It catalyses the reaction D-glucose 6-phosphate + UDP-alpha-D-glucose = alpha,alpha-trehalose 6-phosphate + UDP + H(+). The protein operates within glycan biosynthesis; trehalose biosynthesis. Probably involved in the osmoprotection via the biosynthesis of trehalose. Catalyzes the transfer of glucose from UDP-alpha-D-glucose (UDP-Glc) to D-glucose 6-phosphate (Glc-6-P) to form trehalose-6-phosphate. Acts with retention of the anomeric configuration of the UDP-sugar donor. This chain is Trehalose-6-phosphate synthase, found in Citrobacter koseri (strain ATCC BAA-895 / CDC 4225-83 / SGSC4696).